We begin with the raw amino-acid sequence, 356 residues long: UDP-N-acetylglucosamine--N-acetylmuramyl-(pentapeptide) pyrophosphoryl-undecaprenol N-acetylglucosamine transferase (356 aa).

UDP-N-acetyl-alpha-D-glucosamine contacts are provided by residues 12-14 (TGG), Asn124, Arg163, Ser188, Ile242, 261-266 (ALTVSE), and Gln287.

It belongs to the glycosyltransferase 28 family. MurG subfamily.

Its subcellular location is the cell inner membrane. It catalyses the reaction di-trans,octa-cis-undecaprenyl diphospho-N-acetyl-alpha-D-muramoyl-L-alanyl-D-glutamyl-meso-2,6-diaminopimeloyl-D-alanyl-D-alanine + UDP-N-acetyl-alpha-D-glucosamine = di-trans,octa-cis-undecaprenyl diphospho-[N-acetyl-alpha-D-glucosaminyl-(1-&gt;4)]-N-acetyl-alpha-D-muramoyl-L-alanyl-D-glutamyl-meso-2,6-diaminopimeloyl-D-alanyl-D-alanine + UDP + H(+). It functions in the pathway cell wall biogenesis; peptidoglycan biosynthesis. Its function is as follows. Cell wall formation. Catalyzes the transfer of a GlcNAc subunit on undecaprenyl-pyrophosphoryl-MurNAc-pentapeptide (lipid intermediate I) to form undecaprenyl-pyrophosphoryl-MurNAc-(pentapeptide)GlcNAc (lipid intermediate II). In Azotobacter vinelandii (strain DJ / ATCC BAA-1303), this protein is UDP-N-acetylglucosamine--N-acetylmuramyl-(pentapeptide) pyrophosphoryl-undecaprenol N-acetylglucosamine transferase.